The following is a 251-amino-acid chain: tRNA (guanine-N(1)-)-methyltransferase (251 aa).

S-adenosyl-L-methionine is bound by residues Gly111 and 131–136 (LGDFVL).

It belongs to the RNA methyltransferase TrmD family. As to quaternary structure, homodimer.

The protein localises to the cytoplasm. It carries out the reaction guanosine(37) in tRNA + S-adenosyl-L-methionine = N(1)-methylguanosine(37) in tRNA + S-adenosyl-L-homocysteine + H(+). Specifically methylates guanosine-37 in various tRNAs. In Synechococcus sp. (strain JA-2-3B'a(2-13)) (Cyanobacteria bacterium Yellowstone B-Prime), this protein is tRNA (guanine-N(1)-)-methyltransferase.